We begin with the raw amino-acid sequence, 345 residues long: Endochitinase 4 (345 aa).

The signal sequence occupies residues 1–27 (MAPLLNTGLVILPLIVSTLLGPMPAFA). Asn29 and Asn89 each carry an N-linked (GlcNAc...) asparagine glycan. The GH18 domain occupies 41–345 (KVLQGYWENW…TFGDNVKGRL (305 aa)). The active-site Proton donor is the Glu163. The N-linked (GlcNAc...) asparagine glycan is linked to Asn316.

The protein belongs to the glycosyl hydrolase 18 family. Chitinase class V subfamily.

It is found in the secreted. It carries out the reaction Random endo-hydrolysis of N-acetyl-beta-D-glucosaminide (1-&gt;4)-beta-linkages in chitin and chitodextrins.. Secreted chitinase involved in the degradation of chitin, a component of the cell walls of fungi and exoskeletal elements of some animals (including worms and arthropods). Participates in the infection process and directly acts in the penetration process of the host cuticle. In Metarhizium robertsii (strain ARSEF 23 / ATCC MYA-3075) (Metarhizium anisopliae (strain ARSEF 23)), this protein is Endochitinase 4 (chi4).